Here is a 240-residue protein sequence, read N- to C-terminus: Acyl-protein thioesterase 1 (240 aa).

Catalysis depends on charge relay system residues serine 129, aspartate 183, and histidine 219.

Belongs to the AB hydrolase superfamily. AB hydrolase 2 family.

Its subcellular location is the cytoplasm. The protein resides in the nucleus. The catalysed reaction is S-hexadecanoyl-L-cysteinyl-[protein] + H2O = L-cysteinyl-[protein] + hexadecanoate + H(+). Its function is as follows. Hydrolyzes fatty acids from S-acylated cysteine residues in proteins with a strong preference for palmitoylated G-alpha proteins over other acyl substrates. Mediates the deacylation of G-alpha proteins such as GPA1 in vivo, but has weak or no activity toward palmitoylated Ras proteins. Has weak lysophospholipase activity in vitro; however such activity may not exist in vivo. In Mycosarcoma maydis (Corn smut fungus), this protein is Acyl-protein thioesterase 1.